The sequence spans 232 residues: N-acetyltransferase 8B (232 aa).

Residues 1 to 62 lie on the Cytoplasmic side of the membrane; that stretch reads MPRFEAQKSS…FLLLLGVPLA (62 aa). A helical; Signal-anchor for type II membrane protein membrane pass occupies residues 63–83; the sequence is LVLVSGSWILAVICIFFLLLL. An N-acetyltransferase domain is found at 79-224; the sequence is FLLLLLRLLA…WRLVDICFIQ (146 aa). The Lumenal segment spans residues 84 to 232; the sequence is LRLLARQPWK…IQLNYSFPSA (149 aa). Lysine 109 carries the N6-acetyllysine modification.

Belongs to the NAT8 family. Acetylation on Lys-109 modulates enzymatic activity. As to expression, expressed in brain (at protein level).

The protein localises to the endoplasmic reticulum-Golgi intermediate compartment membrane. The protein resides in the endoplasmic reticulum membrane. It carries out the reaction L-lysyl-[protein] + acetyl-CoA = N(6)-acetyl-L-lysyl-[protein] + CoA + H(+). Endoplasmic reticulum (ER)-membrane-bound lysine N-acetyltransferase catalyzing the N6-acetylation of lysine residues in the lumen of the ER in various proteins, including PROM1 and BACE1, using acetyl-CoA as acetyl donor. Thereby, may regulate apoptosis through the acetylation and the regulation of the expression of PROM1. Acetylates and stabilizes BACE1 immature protein, leading to increased steady-state levels in neurons. By acting on BACE1 expression, may regulate amyloid beta-peptide formation. N(6)-lysine acetylation in ER maintains protein homeostasis and regulates reticulophagy. The chain is N-acetyltransferase 8B from Mus musculus (Mouse).